Here is a 315-residue protein sequence, read N- to C-terminus: Aspartate carbamoyltransferase catalytic subunit (315 aa).

Carbamoyl phosphate is bound by residues Arg64 and Thr65. Lys92 is an L-aspartate binding site. 3 residues coordinate carbamoyl phosphate: Arg114, His142, and Gln145. Positions 175 and 229 each coordinate L-aspartate. Positions 270 and 271 each coordinate carbamoyl phosphate.

This sequence belongs to the aspartate/ornithine carbamoyltransferase superfamily. ATCase family. Heterododecamer (2C3:3R2) of six catalytic PyrB chains organized as two trimers (C3), and six regulatory PyrI chains organized as three dimers (R2).

The catalysed reaction is carbamoyl phosphate + L-aspartate = N-carbamoyl-L-aspartate + phosphate + H(+). It participates in pyrimidine metabolism; UMP biosynthesis via de novo pathway; (S)-dihydroorotate from bicarbonate: step 2/3. Catalyzes the condensation of carbamoyl phosphate and aspartate to form carbamoyl aspartate and inorganic phosphate, the committed step in the de novo pyrimidine nucleotide biosynthesis pathway. The polypeptide is Aspartate carbamoyltransferase catalytic subunit (Bradyrhizobium diazoefficiens (strain JCM 10833 / BCRC 13528 / IAM 13628 / NBRC 14792 / USDA 110)).